The chain runs to 708 residues: Radial spoke head protein 6 homolog A (708 aa).

Disordered regions lie at residues 1–94 (MGEP…GYTP), 376–407 (ETHGEEEGEEDEEKVVDSVPKPQWKPPPIIPK), 495–514 (EEEGDEEEEGGAGRDSFEEN), and 663–708 (GPEI…DLED). Over residues 10-32 (PSQTRRASQGSERARSQEYSQPL) the composition is skewed to polar residues. Residues 47–56 (RGSRSSQGSQ) show a composition bias toward low complexity. Over residues 495–504 (EEEGDEEEEG) the composition is skewed to acidic residues. Over residues 680–690 (LKAAQEQALAA) the composition is skewed to low complexity. Positions 691–708 (AEEEEEDEEEEEDEDLED) are enriched in acidic residues.

Belongs to the flagellar radial spoke RSP4/6 family. Component of the axonemal radial spoke 1 (RS1) and 2 (RS2) complexes, at least composed of spoke head proteins RSPH1, RSPH3, RSPH9 and the cilia-specific component RSPH4A or sperm-specific component RSPH6A, spoke stalk proteins RSPH14, DNAJB13, DYDC1, ROPN1L and NME5, and the RS1 complex-specific anchor protein IQUB. Interacts with RSPH1. Interacts with RSPH3B. Interacts with RSPH4A. Interacts with RSPH9. Interacts with RSPH10B. Phosphorylated by PKA. Phosphorylation increases in capacitated sperm. Expressed in sperm and testis (at protein level).

The protein resides in the cytoplasm. Its subcellular location is the cytoskeleton. The protein localises to the flagellum axoneme. Functions as part of radial spoke complexes in the axoneme of sperm flagella that play an important part in motility. The triple radial spokes (RS1, RS2 and RS3) are required to modulate beating of the sperm flagellum. The chain is Radial spoke head protein 6 homolog A from Mus musculus (Mouse).